We begin with the raw amino-acid sequence, 274 residues long: 2,3,4,5-tetrahydropyridine-2,6-dicarboxylate N-succinyltransferase (274 aa).

Substrate is bound by residues R107 and D144.

Belongs to the transferase hexapeptide repeat family. As to quaternary structure, homotrimer.

The protein localises to the cytoplasm. The catalysed reaction is (S)-2,3,4,5-tetrahydrodipicolinate + succinyl-CoA + H2O = (S)-2-succinylamino-6-oxoheptanedioate + CoA. The protein operates within amino-acid biosynthesis; L-lysine biosynthesis via DAP pathway; LL-2,6-diaminopimelate from (S)-tetrahydrodipicolinate (succinylase route): step 1/3. This Cereibacter sphaeroides (strain ATCC 17023 / DSM 158 / JCM 6121 / CCUG 31486 / LMG 2827 / NBRC 12203 / NCIMB 8253 / ATH 2.4.1.) (Rhodobacter sphaeroides) protein is 2,3,4,5-tetrahydropyridine-2,6-dicarboxylate N-succinyltransferase.